Reading from the N-terminus, the 124-residue chain is Sulfur globule protein CV2 (124 aa).

An N-terminal signal peptide occupies residues 1-22; it reads MKKLATAAAVAALLGASASASA.

In terms of assembly, the protein envelope of the sulfur globules is composed of the three different proteins CV1, CV2 and CV3.

Functionally, structural protein of the sulfur globules, which are intracellular globules that serve for sulfur storage in purple sulfur bacteria. This Allochromatium vinosum (strain ATCC 17899 / DSM 180 / NBRC 103801 / NCIMB 10441 / D) (Chromatium vinosum) protein is Sulfur globule protein CV2 (sgpB).